We begin with the raw amino-acid sequence, 244 residues long: Cobalt transport protein CbiM (244 aa).

An N-terminal signal peptide occupies residues 1–28 (MKKLWKFIPFVLMGVIYFTLTNPESAHA). Helical transmembrane passes span 37–57 (PVKW…LGLI), 71–91 (LLLA…IPSV), 103–123 (LATV…VLLF), 135–155 (TLGA…FVVY), 166–186 (SVSI…TTSV), and 206–226 (FMAI…LLTV).

It belongs to the CbiM family. Forms an energy-coupling factor (ECF) transporter complex composed of an ATP-binding protein (A component, CbiO), a transmembrane protein (T component, CbiQ) and 2 possible substrate-capture proteins (S components, CbiM and CbiN) of unknown stoichimetry.

Its subcellular location is the cell membrane. Its pathway is cofactor biosynthesis; adenosylcobalamin biosynthesis. Part of the energy-coupling factor (ECF) transporter complex CbiMNOQ involved in cobalt import. The sequence is that of Cobalt transport protein CbiM from Listeria seeligeri serovar 1/2b (strain ATCC 35967 / DSM 20751 / CCM 3970 / CCUG 15530 / CIP 100100 / LMG 11386 / NCTC 11856 / SLCC 3954 / 1120).